The primary structure comprises 749 residues: Myosin-binding protein 2 (749 aa).

Residues 17 to 37 (ITLILVYAFLEWSLIFFILLN) traverse the membrane as a helical segment. Residues 164 to 184 (NLNDSQEETEEKKVPQSHEKL) are disordered. Residues 173–184 (EEKKVPQSHEKL) are compositionally biased toward basic and acidic residues. Residues 411 to 509 (LTVDKLKFEL…ELEKELEVYR (99 aa)) enclose the GTD-binding domain. The stretch at 589-621 (ERLSILGRLKFLEEKLTDLNNEEDDEEEAKTFE) forms a coiled coil. Positions 608–640 (NNEEDDEEEAKTFESNGSINGNEHIHGKETNGK) are disordered. A compositionally biased stretch (basic and acidic residues) spans 630 to 639 (EHIHGKETNG). A coiled-coil region spans residues 676-710 (DSEKGENVTIEEEVDELYERLEALEADREFLRHCV).

In terms of assembly, interacts with myosin XI-K and XI-1. As to expression, expressed in leaf epidermal cells, roots and root hairs.

The protein localises to the endomembrane system. In terms of biological role, membrane-anchored myosin receptors that define a distinct, plant-specific transport vesicle compartment. This is Myosin-binding protein 2 from Arabidopsis thaliana (Mouse-ear cress).